Consider the following 268-residue polypeptide: Ribosomal RNA small subunit methyltransferase A (268 aa).

Residues N23, I25, G50, E72, D97, and N116 each contribute to the S-adenosyl-L-methionine site.

The protein belongs to the class I-like SAM-binding methyltransferase superfamily. rRNA adenine N(6)-methyltransferase family. RsmA subfamily.

It is found in the cytoplasm. The enzyme catalyses adenosine(1518)/adenosine(1519) in 16S rRNA + 4 S-adenosyl-L-methionine = N(6)-dimethyladenosine(1518)/N(6)-dimethyladenosine(1519) in 16S rRNA + 4 S-adenosyl-L-homocysteine + 4 H(+). In terms of biological role, specifically dimethylates two adjacent adenosines (A1518 and A1519) in the loop of a conserved hairpin near the 3'-end of 16S rRNA in the 30S particle. May play a critical role in biogenesis of 30S subunits. The polypeptide is Ribosomal RNA small subunit methyltransferase A (Rickettsia prowazekii (strain Madrid E)).